A 147-amino-acid polypeptide reads, in one-letter code: 3-dehydroquinate dehydratase (147 aa).

Tyrosine 23 acts as the Proton acceptor in catalysis. Asparagine 74, histidine 80, and aspartate 87 together coordinate substrate. Histidine 100 (proton donor) is an active-site residue. Substrate contacts are provided by residues 101–102 (LS) and arginine 111.

Belongs to the type-II 3-dehydroquinase family. In terms of assembly, homododecamer.

The enzyme catalyses 3-dehydroquinate = 3-dehydroshikimate + H2O. It functions in the pathway metabolic intermediate biosynthesis; chorismate biosynthesis; chorismate from D-erythrose 4-phosphate and phosphoenolpyruvate: step 3/7. In terms of biological role, catalyzes a trans-dehydration via an enolate intermediate. This Clostridium botulinum (strain Kyoto / Type A2) protein is 3-dehydroquinate dehydratase.